We begin with the raw amino-acid sequence, 623 residues long: MSFQKNEYSHKNVSEDNNGQGGNPPIASPLNDQQFNSLQQTVSELSSQQLAWVSGYFWGLAQHQPSAAATPIAQAAAAVSAKPAGKLTIIFASQTGNAKGVAEALEQEAKAEGIAVELFDASDYKGKNLAKETHVIIVASTNGEGEAPDNAIELHEFLQSKKAPKLSNLQYGVIALGDSSYEFFCQTGKDFDTYLAKLGATSFIERIDCDVDYEAAAEEWRKNALGKVKETLSSGNEAEIVQLPVGQAAASHSQYNKQNPYTATLLTSQKITGRDSGKDVRHIEIDLDGSGLTYQPGDALGVWYENSSELASDILGKVGLSGVETVDVDGESLSIHSALVSKFEITTSNPQLVAKFAELSGSKKLQKLAEDKDKLREYSANTQIVDVFAEKKTKLTADELVGLLRRLTPRLYSIASSQAEVDEEVHLTVGLVEYDHNDEKRYGGASSFLAQRLEEGGDVKVFVEHNNNFKLPEDDTTPIIMVGPGTGIAPFRSFIQERENRDAEGKNWLFFGDRTFTQDFLYQVEWQKYLKSGVLSRLDVAFSRDQVEKVYVQHRILENAAQVWQWIQDGAYIYVCGDATRMAKDVHDALVIVAEQEGKMPRDDAEQFINDLRKAKRYQRDVY.

The tract at residues 1 to 32 (MSFQKNEYSHKNVSEDNNGQGGNPPIASPLND) is disordered. The Flavodoxin-like domain maps to 87 to 225 (LTIIFASQTG…AAEEWRKNAL (139 aa)). Residues 93–98 (SQTGNA), 140–143 (STNG), and 176–185 (LGDSSYEFFC) each bind FMN. The region spanning 258–472 (QNPYTATLLT…VEHNNNFKLP (215 aa)) is the FAD-binding FR-type domain. FAD-binding positions include threonine 346, alanine 380, 410 to 413 (RLYS), 428 to 430 (TVG), tyrosine 434, and 443 to 446 (GGAS). Residues 543–544 (SR), 549–553 (KVYVQ), and aspartate 585 each bind NADP(+). Tyrosine 623 serves as a coordination point for FAD.

The protein belongs to the NADPH-dependent sulphite reductase flavoprotein subunit CysJ family. It in the N-terminal section; belongs to the flavodoxin family. In the C-terminal section; belongs to the flavoprotein pyridine nucleotide cytochrome reductase family. As to quaternary structure, alpha(8)-beta(8). The alpha component is a flavoprotein, the beta component is a hemoprotein. The cofactor is FAD. Requires FMN as cofactor.

It carries out the reaction hydrogen sulfide + 3 NADP(+) + 3 H2O = sulfite + 3 NADPH + 4 H(+). Its pathway is sulfur metabolism; hydrogen sulfide biosynthesis; hydrogen sulfide from sulfite (NADPH route): step 1/1. Component of the sulfite reductase complex that catalyzes the 6-electron reduction of sulfite to sulfide. This is one of several activities required for the biosynthesis of L-cysteine from sulfate. The flavoprotein component catalyzes the electron flow from NADPH -&gt; FAD -&gt; FMN to the hemoprotein component. The polypeptide is Sulfite reductase [NADPH] flavoprotein alpha-component (Vibrio parahaemolyticus serotype O3:K6 (strain RIMD 2210633)).